The following is a 302-amino-acid chain: MDEKRLTHLRQLEAESIHIIREVAAEFGNPVMLYSIGKDSSVMLHLARKAFFPGNLPFPLLHVDTGWKFREMYEFRDHTAKAFGCELLVHRNPEGVAMGINPFVHGSAKHTDIMKTEGLKQALNKYGFDAAFGGARRDEEKSRAKERIYSFRDRFHRWDPKNQRPELWHNYNGQINKGESIRVFPLSNWTELDIWQYIFLEKIDIVPLYLAKPRPVVERDGMLLMVDDDRIDLQPGEVITQKMVRFRTLGCWPLTGAVESEAQTLPAIIEEMLISTTSERQGRMIDRDQSGSMELKKRQGYF.

The protein belongs to the PAPS reductase family. CysD subfamily. Heterodimer composed of CysD, the smaller subunit, and CysN.

The catalysed reaction is sulfate + ATP + H(+) = adenosine 5'-phosphosulfate + diphosphate. Its pathway is sulfur metabolism; hydrogen sulfide biosynthesis; sulfite from sulfate: step 1/3. In terms of biological role, with CysN forms the ATP sulfurylase (ATPS) that catalyzes the adenylation of sulfate producing adenosine 5'-phosphosulfate (APS) and diphosphate, the first enzymatic step in sulfur assimilation pathway. APS synthesis involves the formation of a high-energy phosphoric-sulfuric acid anhydride bond driven by GTP hydrolysis by CysN coupled to ATP hydrolysis by CysD. This is Sulfate adenylyltransferase subunit 2 from Yersinia enterocolitica serotype O:8 / biotype 1B (strain NCTC 13174 / 8081).